The chain runs to 338 residues: Aspartate carbamoyltransferase catalytic subunit (338 aa).

2 residues coordinate carbamoyl phosphate: R72 and T73. K100 serves as a coordination point for L-aspartate. Residues R122, H152, and Q155 each contribute to the carbamoyl phosphate site. L-aspartate-binding residues include R186 and R243. The carbamoyl phosphate site is built by G284 and P285.

Belongs to the aspartate/ornithine carbamoyltransferase superfamily. ATCase family. In terms of assembly, heterododecamer (2C3:3R2) of six catalytic PyrB chains organized as two trimers (C3), and six regulatory PyrI chains organized as three dimers (R2).

The enzyme catalyses carbamoyl phosphate + L-aspartate = N-carbamoyl-L-aspartate + phosphate + H(+). It functions in the pathway pyrimidine metabolism; UMP biosynthesis via de novo pathway; (S)-dihydroorotate from bicarbonate: step 2/3. Functionally, catalyzes the condensation of carbamoyl phosphate and aspartate to form carbamoyl aspartate and inorganic phosphate, the committed step in the de novo pyrimidine nucleotide biosynthesis pathway. This Acinetobacter baumannii (strain ACICU) protein is Aspartate carbamoyltransferase catalytic subunit.